Here is a 354-residue protein sequence, read N- to C-terminus: Macrosialin (354 aa).

An N-terminal signal peptide occupies residues 1 to 21 (MRLAVLFSGALLGLLAAQGTG). The Extracellular segment spans residues 22–319 (NDCPHKKSAT…QSFSCPSDRS (298 aa)). Residues 23–140 (DCPHKKSATL…SPGFTSSAHP (118 aa)) are mucin-like. A compositionally biased stretch (low complexity) spans 40–51 (PTVTESTGTTSH). A disordered region spans residues 40–162 (PTVTESTGTT…SKETIGDYTW (123 aa)). Residues 52–61 (RTTKSHKTTT) show a composition bias toward basic residues. The segment covering 62 to 84 (HRTTTTGTTSHGPTTATHNPTTT) has biased composition (low complexity). A run of 2 repeats spans residues 70-99 (TSHG…NSTA) and 100-129 (TSQG…NSTA). Residues 70–129 (TSHGPTTATHNPTTTSHGNVTVHPTSNSTATSQGPSTATHSPATTSHGNATVHPTSNSTA) are 2 X 30 AA tandem repeats. Over residues 85–102 (SHGNVTVHPTSNSTATSQ) the composition is skewed to polar residues. N-linked (GlcNAc...) asparagine glycans are attached at residues Asn-88 and Asn-96. Residues 103-117 (GPSTATHSPATTSHG) show a composition bias toward low complexity. N-linked (GlcNAc...) asparagine glycans are attached at residues Asn-118 and Asn-126. A compositionally biased stretch (polar residues) spans 121-135 (VHPTSNSTATSPGFT). Positions 140 to 150 (PEPPPPSPSPS) are enriched in pro residues. N-linked (GlcNAc...) asparagine glycosylation is found at Asn-164, Asn-199, Asn-246, Asn-261, and Asn-279. Cys-169 and Cys-207 are joined by a disulfide. A disulfide bond links Cys-277 and Cys-314. Residues 320–344 (ILLPLIIGLILLGLLALVLIAFCII) traverse the membrane as a helical segment. Residues 345 to 354 (RRRPSAYQAL) are Cytoplasmic-facing.

It belongs to the LAMP family. In terms of processing, N- and O-glycosylated. In terms of tissue distribution, highly expressed by blood monocytes and tissue macrophages. Also expressed in lymphocytes, fibroblasts and endothelial cells. Expressed in many tumor cell lines which could allow them to attach to selectins on vascular endothelium, facilitating their dissemination to secondary sites.

It localises to the cell membrane. The protein resides in the endosome membrane. It is found in the lysosome membrane. Functionally, could play a role in phagocytic activities of tissue macrophages, both in intracellular lysosomal metabolism and extracellular cell-cell and cell-pathogen interactions. Binds to tissue- and organ-specific lectins or selectins, allowing homing of macrophage subsets to particular sites. Rapid recirculation of CD68 from endosomes and lysosomes to the plasma membrane may allow macrophages to crawl over selectin-bearing substrates or other cells. The polypeptide is Macrosialin (CD68) (Homo sapiens (Human)).